Reading from the N-terminus, the 104-residue chain is Large ribosomal subunit protein uL23 (104 aa).

It belongs to the universal ribosomal protein uL23 family. As to quaternary structure, part of the 50S ribosomal subunit. Contacts protein L29, and trigger factor when it is bound to the ribosome.

One of the early assembly proteins it binds 23S rRNA. One of the proteins that surrounds the polypeptide exit tunnel on the outside of the ribosome. Forms the main docking site for trigger factor binding to the ribosome. The protein is Large ribosomal subunit protein uL23 of Neisseria meningitidis serogroup B (strain ATCC BAA-335 / MC58).